We begin with the raw amino-acid sequence, 243 residues long: MTPTANLLLPAPPFVPISDVRRLQLPPRVRHQPRPCWKGVEWGSIQTRMVSSFVAVGSRTRRRNVICASLFGVGAPEALVIGVVALLVFGPKGLAEVARNLGKTLRAFQPTIRELQDVSREFRSTLEREIGIDEVSQSTNYRPTTMNNNQQPAADPNVKPEPAPYTSEELMKVTEEQIAASAAAAWNPQQPATSQQQEEAPTTPRSEDAPTSGGSDGPAAPARAVSDSDPNQVNKSQKAEGER.

Residues 1–67 constitute a chloroplast transit peptide; it reads MTPTANLLLP…SRTRRRNVIC (67 aa). The Lumenal portion of the chain corresponds to 68–69; that stretch reads AS. Residues 70-90 traverse the membrane as a helical segment; sequence LFGVGAPEALVIGVVALLVFG. Residues 91–243 are Stromal-facing; sequence PKGLAEVARN…NKSQKAEGER (153 aa). 2 disordered regions span residues 129-165 and 178-243; these read EIGIDEVSQSTNYRPTTMNNNQQPAADPNVKPEPAPY and IAAS…EGER. Composition is skewed to polar residues over residues 135-152 and 187-204; these read VSQSTNYRPTTMNNNQQP and NPQQPATSQQQEEAPTTP.

The protein belongs to the TatB family. As to quaternary structure, in thylakoid membranes, TATC and TATB form a large receptor complex, containing about eight TATC-TATB pairs, which binds the precursor protein. Twin arginine signal peptide promotes pH-triggered docking of TATA oligomers to TATC-TATB receptor complex, inducing a conformational switch of TATA that results in activation of the translocase. TATA dissociates from TATC-TATB upon completion of translocation.

It is found in the plastid. The protein resides in the chloroplast thylakoid membrane. Its function is as follows. Part of the twin-arginine translocation (Tat) system that transports large folded proteins containing a characteristic twin-arginine motif in their signal peptide across the thylakoid membrane. Involved in delta pH-dependent protein transport required for chloroplast development, especially thylakoid membrane formation. TATC and TATB mediate precursor recognition, whereas TATA facilitates translocation. This chain is Sec-independent protein translocase protein TATB, chloroplastic, found in Zea mays (Maize).